The chain runs to 142 residues: Sec-independent protein translocase protein TatB (142 aa).

The helical transmembrane segment at 1 to 21 (MFDIGASELLVLVIVAIVVIG) threads the bilayer. The disordered stretch occupies residues 75–142 (RETAAQETAA…PAARPGSQQP (68 aa)). The span at 76–94 (ETAAQETAAAQGQTPAAAE) shows a compositional bias: low complexity. A compositionally biased stretch (basic and acidic residues) spans 123-133 (AKVEARVEEAP).

Belongs to the TatB family. The Tat system comprises two distinct complexes: a TatABC complex, containing multiple copies of TatA, TatB and TatC subunits, and a separate TatA complex, containing only TatA subunits. Substrates initially bind to the TatABC complex, which probably triggers association of the separate TatA complex to form the active translocon.

The protein localises to the cell inner membrane. Part of the twin-arginine translocation (Tat) system that transports large folded proteins containing a characteristic twin-arginine motif in their signal peptide across membranes. Together with TatC, TatB is part of a receptor directly interacting with Tat signal peptides. TatB may form an oligomeric binding site that transiently accommodates folded Tat precursor proteins before their translocation. This is Sec-independent protein translocase protein TatB from Novosphingobium aromaticivorans (strain ATCC 700278 / DSM 12444 / CCUG 56034 / CIP 105152 / NBRC 16084 / F199).